The following is a 95-amino-acid chain: Large ribosomal subunit protein bL25 (95 aa).

The protein belongs to the bacterial ribosomal protein bL25 family. Part of the 50S ribosomal subunit; part of the 5S rRNA/L5/L18/L25 subcomplex. Contacts the 5S rRNA. Binds to the 5S rRNA independently of L5 and L18.

Its function is as follows. This is one of the proteins that binds to the 5S RNA in the ribosome where it forms part of the central protuberance. This is Large ribosomal subunit protein bL25 from Buchnera aphidicola subsp. Acyrthosiphon pisum (strain 5A).